The following is a 121-amino-acid chain: Large ribosomal subunit protein uL14 (121 aa).

The protein belongs to the universal ribosomal protein uL14 family. In terms of assembly, part of the 50S ribosomal subunit. Forms a cluster with proteins L3 and L19. In the 70S ribosome, L14 and L19 interact and together make contacts with the 16S rRNA in bridges B5 and B8.

Its function is as follows. Binds to 23S rRNA. Forms part of two intersubunit bridges in the 70S ribosome. This chain is Large ribosomal subunit protein uL14, found in Prochlorococcus marinus (strain MIT 9211).